Consider the following 598-residue polypeptide: Major royal jelly protein 5 (598 aa).

The N-terminal stretch at 1–17 is a signal peptide; sequence MTTWLLLVVCLGIACQG. Asn-148, Asn-164, Asn-181, and Asn-324 each carry an N-linked (GlcNAc...) asparagine glycan.

This sequence belongs to the major royal jelly protein family. Found in and secreted from the hypopharyngeal glands of the worker honey bee (at protein level); expression peaks at 8 days post eclosion. Expressed in the brains of adult worker bees peaking at 12 days post eclosion (at protein level). Expressed in the spermatheca of adult queen bees (at protein level); Expression levels are higher in mated queens than in virgin queens. Expressed in the heads of worker bees after eclosion, expression dropping with age and detectable up to 26 days of age.

Its subcellular location is the secreted. Functionally, component of royal jelly, a substance produced in the hypopharyngeal gland containing proteins, free amino acids, fatty acids, sugars and other nutrients, which is fed to developing larvae by worker nurse bees. Major royal jelly proteins (MRJPs) are high in essential amino acids and probably have a nutritional function in larval food. All larvae are fed some royal jelly (also known as worker jelly) early in their development but it forms the principal source of nutrition for larvae destined to become queen bees. Produced in the spermatheca of adult queen bees, along with other major royal jelly proteins, where it may act as a nutrient supply for sperm stored by mated queens, or be involved in energy metabolism. The sequence is that of Major royal jelly protein 5 from Apis mellifera (Honeybee).